Here is a 241-residue protein sequence, read N- to C-terminus: Uridylate kinase (241 aa).

15-18 (KLSG) is an ATP binding site. Residues 23 to 28 (GSEGFG) form an involved in allosteric activation by GTP region. Glycine 57 contributes to the UMP binding site. The ATP site is built by glycine 58 and arginine 62. UMP is bound by residues aspartate 77 and 138-145 (TGNPFFTT). ATP-binding residues include threonine 165, phenylalanine 171, and aspartate 174.

Belongs to the UMP kinase family. In terms of assembly, homohexamer.

It localises to the cytoplasm. The enzyme catalyses UMP + ATP = UDP + ADP. Its pathway is pyrimidine metabolism; CTP biosynthesis via de novo pathway; UDP from UMP (UMPK route): step 1/1. Its activity is regulated as follows. Allosterically activated by GTP. Inhibited by UTP. Catalyzes the reversible phosphorylation of UMP to UDP. The protein is Uridylate kinase of Klebsiella pneumoniae subsp. pneumoniae (strain ATCC 700721 / MGH 78578).